The chain runs to 298 residues: MLTIDHVTKTFGDYKAVDGLDLDIPEQQMFGLLGANGAGKTTTFRMILGLLSITEGSISWKGRPVNYHISNKIGYLPEERGLYPKMKVRDQLVYLARLKGMEKREAVKELGTWLERFNITDYENKKVEELSKGNQQKIQFISAVLHKPELLILDEPFSGLDPVNVELLKEAVISLKNSGVSILFSSHRMEHVEELCENLCILQKGKPVVQGKLKEIKRSFGKKNVTIHSDDDLRFLQSHEGILQWKETADGVKLQIANEDISQEIFAMLQGKGFIRKFELEEPSLHDIFIEKVGAVYE.

Positions 2–229 (LTIDHVTKTF…FGKKNVTIHS (228 aa)) constitute an ABC transporter domain. 34-41 (GANGAGKT) contributes to the ATP binding site.

This sequence belongs to the ABC transporter superfamily.

The protein localises to the cell membrane. This is an uncharacterized protein from Bacillus subtilis (strain 168).